A 1188-amino-acid polypeptide reads, in one-letter code: DNA-directed RNA polymerase subunit beta (1188 aa).

Belongs to the RNA polymerase beta chain family. In terms of assembly, the RNAP catalytic core consists of 2 alpha, 1 beta, 1 beta' and 1 omega subunit. When a sigma factor is associated with the core the holoenzyme is formed, which can initiate transcription.

It catalyses the reaction RNA(n) + a ribonucleoside 5'-triphosphate = RNA(n+1) + diphosphate. DNA-dependent RNA polymerase catalyzes the transcription of DNA into RNA using the four ribonucleoside triphosphates as substrates. This chain is DNA-directed RNA polymerase subunit beta, found in Streptococcus pyogenes serotype M18 (strain MGAS8232).